The primary structure comprises 860 residues: MDYLVGIFLLLCGVALPGRVAPQHTKENVPRLKLSYNEMLESSNLVTFTGLANSSGYDTFLMDGERGRLLVGAEDHVFSFDLVNINRDVKQIAWPATPSKRDECKWAGKDLRKDCSNFVRVLQSYNQTHIYICGTGAFHPICSFLEMGKRAEDNIFRLDANYFENGRGKSPYDPKMQSSSLLLDGELYSGTSADFMGRDFAIFRTLGSHHPIRTEQHDSRWLNEPRFLGIHLIPESDNPEDDKIFLFFKENAMDGEHTGKATISRIGQLCKNDMGGHRSLVNKWTTFLKAKLTCSVPGLNGIDTHFDELQDVFLMSAKDPKNPVIYAVFTTSSNIFRGSAICMYSMADIRRVFLGPYAHRDGPNYQWVPFQGRVPYPRPGTCPSKTFGGFDSTKDLPDDVITFARLHPAMYNPVQPMGGKPIVVRTNVEYQFTQLVVDRVEAEDGQYDVMFIGTDLGTVLKVVTIPRESWHDLEEVVLEEMTVFREPTPITAMELSTKQQQLYLGSDLGISQMPLHRCEVYGKACAECCLARDPYCAWDGTECSRYFPTAKRRTRRQDIRNGDPLSQCSDLHHNDDLEGYSSVEERSVYGVENSSMFLECSPKSQRALIYWQLQKPNDERKHEIVIDERLSLTGQGLLIRSLTQADSGVFLCHAVEHGFIQPLRRINLQVIPSQRVGELLLRAGTNDKDPAPKHKLWYRDFMSLLEHPDLNSVDEFCERIWKREKKPKGKKAPKVNPGTGVSIKNEKTPQTTAQSLQNPTQRAQNAPKVPNNPSVQIFPKSTGLQRSQSPGGTVSTESQSTKPDTQKASESQRAQPNQAKKGPQTPQRGPPHTAKWKQLQENKRGRNRRTHEQQRPPRSV.

An N-terminal signal peptide occupies residues 1 to 17 (MDYLVGIFLLLCGVALP). One can recognise a Sema domain in the interval 31–515 (RLKLSYNEML…SDLGISQMPL (485 aa)). N-linked (GlcNAc...) asparagine glycosylation occurs at N53. C104 and C115 form a disulfide bridge. N-linked (GlcNAc...) asparagine glycosylation occurs at N126. 4 cysteine pairs are disulfide-bonded: C133–C142, C270–C382, C294–C342, and C518–C536. Positions 579–668 (GYSSVEERSV…FIQPLRRINL (90 aa)) constitute an Ig-like C2-type domain. The N-linked (GlcNAc...) asparagine glycan is linked to N593. The cysteines at positions 652 and 717 are disulfide-linked. The disordered stretch occupies residues 725-860 (KKPKGKKAPK…HEQQRPPRSV (136 aa)). Composition is skewed to polar residues over residues 748–764 (TPQT…QRAQ) and 782–818 (TGLQ…QPNQ). A compositionally biased stretch (basic and acidic residues) spans 838–860 (QLQENKRGRNRRTHEQQRPPRSV).

Belongs to the semaphorin family.

The protein localises to the secreted. In terms of biological role, may influence outgrowth by a variety of growth cones including those of the posterior lateral line ganglion. The sequence is that of Semaphorin-3aa (sema3aa) from Danio rerio (Zebrafish).